Reading from the N-terminus, the 332-residue chain is MIDLIKRLPKAELHLHIEGSLEPELMFRLAKKNQIEIPYKDIEDVRNAYNFTNLQTFLDIYYAGANVLITQDDFYDLTWEYILKCVEDNVIHTEIFFDPQTHTARGVTFETVITGIKRALADAKAQYGITSCIIMCFLRHLSQEEAFETLEQALPFKDDIIGVGLDSSELGNPPSKFIEVFKKAKEEGFKLVAHAGEEADFSYIYEALDLLDISRIDHGVQSIKSAELMQRLKDEQMPLTVCPNSNIELRVFNNYKEHNIKELLDYGLNITVNSDDPAYFKGYINQNFINISENLPLTEDDIITLVKNSFRSSFISDELKQQYLNRVDQAVG.

Residues His-14, His-16, and His-194 each coordinate Zn(2+). The active-site Proton donor is Glu-197. Asp-275 contributes to the Zn(2+) binding site. Asp-276 lines the substrate pocket.

Belongs to the metallo-dependent hydrolases superfamily. Adenosine and AMP deaminases family. Adenine deaminase type 2 subfamily. It depends on Zn(2+) as a cofactor.

It carries out the reaction adenine + H2O + H(+) = hypoxanthine + NH4(+). Catalyzes the hydrolytic deamination of adenine to hypoxanthine. Plays an important role in the purine salvage pathway and in nitrogen catabolism. The chain is Adenine deaminase from Psychrobacter cryohalolentis (strain ATCC BAA-1226 / DSM 17306 / VKM B-2378 / K5).